The primary structure comprises 479 residues: Aspartyl/glutamyl-tRNA(Asn/Gln) amidotransferase subunit B (479 aa).

The protein belongs to the GatB/GatE family. GatB subfamily. Heterotrimer of A, B and C subunits.

The enzyme catalyses L-glutamyl-tRNA(Gln) + L-glutamine + ATP + H2O = L-glutaminyl-tRNA(Gln) + L-glutamate + ADP + phosphate + H(+). It catalyses the reaction L-aspartyl-tRNA(Asn) + L-glutamine + ATP + H2O = L-asparaginyl-tRNA(Asn) + L-glutamate + ADP + phosphate + 2 H(+). Functionally, allows the formation of correctly charged Asn-tRNA(Asn) or Gln-tRNA(Gln) through the transamidation of misacylated Asp-tRNA(Asn) or Glu-tRNA(Gln) in organisms which lack either or both of asparaginyl-tRNA or glutaminyl-tRNA synthetases. The reaction takes place in the presence of glutamine and ATP through an activated phospho-Asp-tRNA(Asn) or phospho-Glu-tRNA(Gln). This chain is Aspartyl/glutamyl-tRNA(Asn/Gln) amidotransferase subunit B, found in Streptococcus suis (strain 98HAH33).